Consider the following 440-residue polypeptide: Ribulose bisphosphate carboxylase large chain (440 aa).

Lys3 bears the N6,N6,N6-trimethyllysine mark. Substrate-binding residues include Asn112 and Thr162. Residue Lys164 is the Proton acceptor of the active site. Lys166 lines the substrate pocket. Residues Lys190, Asp192, and Glu193 each contribute to the Mg(2+) site. Lys190 carries the post-translational modification N6-carboxylysine. Catalysis depends on His283, which acts as the Proton acceptor. Substrate is bound by residues Arg284, His316, and Ser368.

It belongs to the RuBisCO large chain family. Type I subfamily. Heterohexadecamer of 8 large chains and 8 small chains; disulfide-linked. The disulfide link is formed within the large subunit homodimers. Mg(2+) serves as cofactor. In terms of processing, the disulfide bond which can form in the large chain dimeric partners within the hexadecamer appears to be associated with oxidative stress and protein turnover.

It is found in the plastid. The protein localises to the chloroplast. The catalysed reaction is 2 (2R)-3-phosphoglycerate + 2 H(+) = D-ribulose 1,5-bisphosphate + CO2 + H2O. It carries out the reaction D-ribulose 1,5-bisphosphate + O2 = 2-phosphoglycolate + (2R)-3-phosphoglycerate + 2 H(+). RuBisCO catalyzes two reactions: the carboxylation of D-ribulose 1,5-bisphosphate, the primary event in carbon dioxide fixation, as well as the oxidative fragmentation of the pentose substrate in the photorespiration process. Both reactions occur simultaneously and in competition at the same active site. The chain is Ribulose bisphosphate carboxylase large chain from Bambusa multiplex (Hedge bamboo).